Consider the following 563-residue polypeptide: Pyruvate decarboxylase (563 aa).

2 residues coordinate pyruvate: D28 and H115. Residues T390 and 413–415 (GSI) contribute to the thiamine diphosphate site. D444 contacts Mg(2+). Residues 445–446 (GS) and 471–476 (NDGYTI) contribute to the thiamine diphosphate site. N471 and G473 together coordinate Mg(2+). E477 provides a ligand contact to pyruvate.

This sequence belongs to the TPP enzyme family. As to quaternary structure, homotetramer. The cofactor is Mg(2+). Thiamine diphosphate is required as a cofactor.

The enzyme catalyses a 2-oxocarboxylate + H(+) = an aldehyde + CO2. It catalyses the reaction pyruvate + H(+) = acetaldehyde + CO2. The sequence is that of Pyruvate decarboxylase (PDC1) from Kluyveromyces lactis (strain ATCC 8585 / CBS 2359 / DSM 70799 / NBRC 1267 / NRRL Y-1140 / WM37) (Yeast).